The following is a 446-amino-acid chain: Protein odr-4 homolog (446 aa).

Residues 76–96 form a helical membrane-spanning segment; that stretch reads ASQVGRMLPGGLMVLGVFLMT. A compositionally biased stretch (basic and acidic residues) spans 394-415; the sequence is HPEKRESEPASQHLESKPENKA. Positions 394–417 are disordered; the sequence is HPEKRESEPASQHLESKPENKARS. Residues 426–446 traverse the membrane as a helical segment; it reads GLVISTIVASIAIIISFYYIM.

Belongs to the ODR-4 family.

The protein resides in the membrane. May play a role in the trafficking of a subset of G-protein coupled receptors. The sequence is that of Protein odr-4 homolog (odr4) from Xenopus laevis (African clawed frog).